We begin with the raw amino-acid sequence, 278 residues long: Dehydrogenase/reductase SDR family member 4 (278 aa).

36–60 provides a ligand contact to NADP(+); the sequence is LVTASTDGIGFAIARRLAQDGAHVV. Residue K92 is modified to N6-acetyllysine; alternate. An N6-succinyllysine; alternate modification is found at K92. The residue at position 105 (K105) is an N6-acetyllysine. I140 is modified (phosphoserine). S169 provides a ligand contact to substrate. Y182 acts as the Proton acceptor in catalysis. Position 186 (K186) interacts with NADP(+). N6-acetyllysine; alternate is present on K216. Position 216 is an N6-succinyllysine; alternate (K216). S220 is subject to Phosphoserine. 2 positions are modified to N6-succinyllysine: K227 and K234. A Peroxisomal targeting signal motif is present at residues 276-278; it reads SRL.

Belongs to the short-chain dehydrogenases/reductases (SDR) family. As to quaternary structure, homotetramer. As to expression, predominantly expressed in normal cervix (at protein level). Expressed in some neoplastic cervical tissues, but not in normal cervix (at protein level). In terms of tissue distribution, expressed in a few neoplastic cervical tissues. As to expression, high expression in liver.

The protein localises to the peroxisome. The protein resides in the nucleus. It carries out the reaction a secondary alcohol + NADP(+) = a ketone + NADPH + H(+). The catalysed reaction is 3beta-hydroxy-5beta-pregnane-20-one + NADP(+) = 5beta-pregnan-3,20-dione + NADPH + H(+). The enzyme catalyses 5beta-dihydrotestosterone + NADPH + H(+) = 5beta-androstane-3beta,17beta-diol + NADP(+). It catalyses the reaction 5beta-androstane-3,17-dione + NADPH + H(+) = 3beta-hydroxy-5beta-androstane-17-one + NADP(+). It carries out the reaction isatin + NADPH + H(+) = 3-hydroxyindolin-2-one + NADP(+). The catalysed reaction is lithocholate + NADP(+) = 3-oxo-5beta-cholan-24-oate + NADPH + H(+). The enzyme catalyses 3-oxo-5beta-cholan-24-oate + NADPH + H(+) = isolithocholate + NADP(+). Inhibited by flavonoids (quercetin and genistein), cetylpyridium chloride, phenylhexane and valproic acid. Low inhibition is observed with fatty acids (myristic acid and lauric acid). No significant inhibition is observed with barbital, dicumarol, indomethacin, metyrapone, ethacrynic acid, disulfiram, hexestrol and benzodiazepines (diazepam and nitrazepam). Functionally, NADPH-dependent oxidoreductase which catalyzes the reduction of a variety of compounds bearing carbonyl groups including ketosteroids, alpha-dicarbonyl compounds, aldehydes, aromatic ketones and quinones. Reduces 3-ketosteroids and benzil into 3beta-hydroxysteroids and R-benzoin, respectively, in contrast to the stereoselectivity of non-primate DHRS4s which produce 3alpha-hydroxysteroids and S-benzoin. Diplays low activity toward all-trans-retinal and no activity toward 9-cis-retinal as compared to non-primate mammals. In the reverse reaction, catalyze the NAD-dependent oxidation of 3beta-hydroxysteroids and alcohol, but with much lower efficiency. Involved in the metabolism of 3beta-hydroxysteroids, isatin and xenobiotic carbonyl compounds. No detected catalytic activity in vitro, possibly due to the lack of catalytic site. In terms of biological role, NADPH-dependent oxidoreductase which catalyzes the reduction of a variety of compounds bearing carbonyl groups including ketosteroids, alpha-dicarbonyl compounds, aldehydes, aromatic ketones and quinones. Involved in the metabolism of 3beta-hydroxysteroids, isatin and xenobiotic carbonyl compounds. Has a higher catalytic activity for xenobiotic alpha-dicarbonyl compounds, sucha as benzil, than isoform 1 and is involved in benzil detoxification. The chain is Dehydrogenase/reductase SDR family member 4 from Homo sapiens (Human).